Consider the following 248-residue polypeptide: Mannose-binding protein C (248 aa).

Positions 1–20 (MSPFLSLPLLLLSVLSASYS) are cleaved as a signal peptide. The tract at residues 36–112 (IACSSPGING…GDSSLAASER (77 aa)) is disordered. One can recognise a Collagen-like domain in the interval 42-99 (GINGFPGKDGRDGTKGEKGEPGQGLRGLQGPPGKLGPPGNPGPSGSPGAKGQKGDPGA). A 4-hydroxyproline modification is found at P47. Positions 49–61 (KDGRDGTKGEKGE) are enriched in basic and acidic residues. A 4-hydroxyproline mark is found at P73, P79, P82, and P88. Residues 112–130 (RKALQTEMARIKKWVTFSL) are a coiled coil. The C-type lectin domain occupies 134 to 245 (VGKKLFLSNG…CSSSHLAICE (112 aa)). 2 cysteine pairs are disulfide-bonded: C155–C244 and C222–C236.

Oligomeric complex of 3 or more homotrimers. Interacts with MASP1 and MASP2. Interacts with MEP1A and MEP1B and may inhibit their catalytic activity. Hydroxylation on proline residues within the sequence motif, GXPG, is most likely to be 4-hydroxy as this fits the requirement for 4-hydroxylation in vertebrates.

The protein resides in the secreted. In terms of biological role, calcium-dependent lectin involved in innate immune defense. Binds mannose, fucose and N-acetylglucosamine on different microorganisms and activates the lectin complement pathway. Binds to late apoptotic cells, as well as to apoptotic blebs and to necrotic cells, but not to early apoptotic cells, facilitating their uptake by macrophages. In Saguinus oedipus (Cotton-top tamarin), this protein is Mannose-binding protein C (MBL2).